We begin with the raw amino-acid sequence, 403 residues long: Ribosomal RNA large subunit methyltransferase I (403 aa).

The PUA domain occupies Y9–R88.

This sequence belongs to the methyltransferase superfamily. RlmI family.

It is found in the cytoplasm. It catalyses the reaction cytidine(1962) in 23S rRNA + S-adenosyl-L-methionine = 5-methylcytidine(1962) in 23S rRNA + S-adenosyl-L-homocysteine + H(+). Specifically methylates the cytosine at position 1962 (m5C1962) of 23S rRNA. This is Ribosomal RNA large subunit methyltransferase I from Salmonella choleraesuis (strain SC-B67).